Here is a 150-residue protein sequence, read N- to C-terminus: 3-dehydroquinate dehydratase (150 aa).

Y26 acts as the Proton acceptor in catalysis. Residues N77, H83, and D90 each coordinate substrate. The active-site Proton donor is H103. Substrate is bound by residues L104 to S105 and R114.

This sequence belongs to the type-II 3-dehydroquinase family. Homododecamer.

The enzyme catalyses 3-dehydroquinate = 3-dehydroshikimate + H2O. Its pathway is metabolic intermediate biosynthesis; chorismate biosynthesis; chorismate from D-erythrose 4-phosphate and phosphoenolpyruvate: step 3/7. Catalyzes a trans-dehydration via an enolate intermediate. The chain is 3-dehydroquinate dehydratase from Histophilus somni (strain 129Pt) (Haemophilus somnus).